Consider the following 238-residue polypeptide: DNA damage-regulated autophagy modulator protein 1 (238 aa).

The next 6 membrane-spanning stretches (helical) occupy residues 9–29, 53–73, 91–111, 116–136, 161–181, and 200–220; these read AFVP…SYVV, SGIF…TMYT, VFNL…GIVA, LAVP…GVVY, MVIS…ASLI, and VSAI…LTFI.

The protein belongs to the DRAM/TMEM150 family.

It is found in the lysosome membrane. Its function is as follows. Lysosomal modulator of autophagy that plays a central role in p53/TP53-mediated apoptosis. Not involved in p73/TP73-mediated autophagy. The polypeptide is DNA damage-regulated autophagy modulator protein 1 (DRAM1) (Homo sapiens (Human)).